The sequence spans 390 residues: Protein phosphatase methylesterase 1 (390 aa).

Residues 19–50 (FGLSSLSEDPDESESNSNYFSPTPQPPNELRT) are disordered. The 233-residue stretch at 100–332 (PIFICHHGAG…NLIIGQMQGK (233 aa)) folds into the AB hydrolase-1 domain. Catalysis depends on residues S186, D213, and H346.

Belongs to the AB hydrolase superfamily.

It carries out the reaction [phosphatase 2A protein]-C-terminal L-leucine methyl ester + H2O = [phosphatase 2A protein]-C-terminal L-leucine + methanol + H(+). Demethylates proteins that have been reversibly carboxymethylated. Demethylates the phosphatase PP2A catalytic subunit. In Debaryomyces hansenii (strain ATCC 36239 / CBS 767 / BCRC 21394 / JCM 1990 / NBRC 0083 / IGC 2968) (Yeast), this protein is Protein phosphatase methylesterase 1 (PPE1).